A 158-amino-acid chain; its full sequence is NADH-quinone oxidoreductase subunit B 1 (158 aa).

Residues Cys37, Cys38, Cys102, and Cys132 each contribute to the [4Fe-4S] cluster site.

This sequence belongs to the complex I 20 kDa subunit family. NDH-1 is composed of 14 different subunits. Subunits NuoB, C, D, E, F, and G constitute the peripheral sector of the complex. The cofactor is [4Fe-4S] cluster.

Its subcellular location is the cell inner membrane. The catalysed reaction is a quinone + NADH + 5 H(+)(in) = a quinol + NAD(+) + 4 H(+)(out). Functionally, NDH-1 shuttles electrons from NADH, via FMN and iron-sulfur (Fe-S) centers, to quinones in the respiratory chain. Couples the redox reaction to proton translocation (for every two electrons transferred, four hydrogen ions are translocated across the cytoplasmic membrane), and thus conserves the redox energy in a proton gradient. The chain is NADH-quinone oxidoreductase subunit B 1 from Chromobacterium violaceum (strain ATCC 12472 / DSM 30191 / JCM 1249 / CCUG 213 / NBRC 12614 / NCIMB 9131 / NCTC 9757 / MK).